Here is a 593-residue protein sequence, read N- to C-terminus: Aspartate--tRNA(Asp/Asn) ligase (593 aa).

Glu-175 contributes to the L-aspartate binding site. The segment at Gln-199 to Lys-202 is aspartate. Residues Arg-221 and His-452 each coordinate L-aspartate. Arg-221–Glu-223 provides a ligand contact to ATP. Glu-486 contributes to the ATP binding site. An L-aspartate-binding site is contributed by Arg-493. Gly-538–Arg-541 is an ATP binding site.

The protein belongs to the class-II aminoacyl-tRNA synthetase family. Type 1 subfamily. As to quaternary structure, homodimer.

It is found in the cytoplasm. The catalysed reaction is tRNA(Asx) + L-aspartate + ATP = L-aspartyl-tRNA(Asx) + AMP + diphosphate. In terms of biological role, aspartyl-tRNA synthetase with relaxed tRNA specificity since it is able to aspartylate not only its cognate tRNA(Asp) but also tRNA(Asn). Reaction proceeds in two steps: L-aspartate is first activated by ATP to form Asp-AMP and then transferred to the acceptor end of tRNA(Asp/Asn). This chain is Aspartate--tRNA(Asp/Asn) ligase, found in Novosphingobium aromaticivorans (strain ATCC 700278 / DSM 12444 / CCUG 56034 / CIP 105152 / NBRC 16084 / F199).